Reading from the N-terminus, the 236-residue chain is 1-(5-phosphoribosyl)-5-[(5-phosphoribosylamino)methylideneamino] imidazole-4-carboxamide isomerase (236 aa).

Aspartate 8 acts as the Proton acceptor in catalysis. The active-site Proton donor is the aspartate 129.

Belongs to the HisA/HisF family.

Its subcellular location is the cytoplasm. The enzyme catalyses 1-(5-phospho-beta-D-ribosyl)-5-[(5-phospho-beta-D-ribosylamino)methylideneamino]imidazole-4-carboxamide = 5-[(5-phospho-1-deoxy-D-ribulos-1-ylimino)methylamino]-1-(5-phospho-beta-D-ribosyl)imidazole-4-carboxamide. The protein operates within amino-acid biosynthesis; L-histidine biosynthesis; L-histidine from 5-phospho-alpha-D-ribose 1-diphosphate: step 4/9. The protein is 1-(5-phosphoribosyl)-5-[(5-phosphoribosylamino)methylideneamino] imidazole-4-carboxamide isomerase of Methanoregula boonei (strain DSM 21154 / JCM 14090 / 6A8).